We begin with the raw amino-acid sequence, 300 residues long: Ribosomal RNA small subunit methyltransferase H (300 aa).

S-adenosyl-L-methionine contacts are provided by residues 46–48 (GGH), D65, F92, D107, and Q114.

The protein belongs to the methyltransferase superfamily. RsmH family.

It localises to the cytoplasm. The catalysed reaction is cytidine(1402) in 16S rRNA + S-adenosyl-L-methionine = N(4)-methylcytidine(1402) in 16S rRNA + S-adenosyl-L-homocysteine + H(+). Specifically methylates the N4 position of cytidine in position 1402 (C1402) of 16S rRNA. This Prochlorococcus marinus (strain MIT 9215) protein is Ribosomal RNA small subunit methyltransferase H.